A 366-amino-acid chain; its full sequence is Carbamoyl phosphate synthase small chain (366 aa).

Residues 1-171 (MKKRKLILED…KPYVVPGRGL (171 aa)) form a CPSase region. The L-glutamine site is built by Ser-46, Gly-220, and Gly-222. Residues 172–359 (RVVMVDFGAK…LNLIKASKVK (188 aa)) form the Glutamine amidotransferase type-1 domain. Cys-247 (nucleophile) is an active-site residue. 4 residues coordinate L-glutamine: Leu-248, Gln-251, Asn-289, and Tyr-292. Residues His-332 and Glu-334 contribute to the active site.

Belongs to the CarA family. As to quaternary structure, composed of two chains; the small (or glutamine) chain promotes the hydrolysis of glutamine to ammonia, which is used by the large (or ammonia) chain to synthesize carbamoyl phosphate. Tetramer of heterodimers (alpha,beta)4.

The enzyme catalyses hydrogencarbonate + L-glutamine + 2 ATP + H2O = carbamoyl phosphate + L-glutamate + 2 ADP + phosphate + 2 H(+). It catalyses the reaction L-glutamine + H2O = L-glutamate + NH4(+). Its pathway is amino-acid biosynthesis; L-arginine biosynthesis; carbamoyl phosphate from bicarbonate: step 1/1. It participates in pyrimidine metabolism; UMP biosynthesis via de novo pathway; (S)-dihydroorotate from bicarbonate: step 1/3. Functionally, small subunit of the glutamine-dependent carbamoyl phosphate synthetase (CPSase). CPSase catalyzes the formation of carbamoyl phosphate from the ammonia moiety of glutamine, carbonate, and phosphate donated by ATP, constituting the first step of 2 biosynthetic pathways, one leading to arginine and/or urea and the other to pyrimidine nucleotides. The small subunit (glutamine amidotransferase) binds and cleaves glutamine to supply the large subunit with the substrate ammonia. The polypeptide is Carbamoyl phosphate synthase small chain (Oceanobacillus iheyensis (strain DSM 14371 / CIP 107618 / JCM 11309 / KCTC 3954 / HTE831)).